Reading from the N-terminus, the 468-residue chain is Cyclin-dependent kinase 14 (468 aa).

A phosphoserine mark is found at S24, S77, and S94. Positions 103 to 132 (KTSSAGKESPKVRRHSSPSSPTSPKFGKAD) are disordered. Residue S133 is modified to Phosphoserine. The Protein kinase domain maps to 134 to 418 (YEKLEKLGEG…AQAALSHEYF (285 aa)). ATP is bound by residues 140-148 (LGEGSYATV) and K163. Residue D255 is the Proton acceptor of the active site. The interval 448 to 468 (ESMRAFGKNNSYGKSLSNSKH) is disordered. Positions 455–468 (KNNSYGKSLSNSKH) are enriched in polar residues.

This sequence belongs to the protein kinase superfamily. CMGC Ser/Thr protein kinase family. CDC2/CDKX subfamily. As to quaternary structure, found in a complex with LRP6, CCNY and CAPRIN2 during G2/M stage; CAPRIN2 functions as a scaffold for the complex by binding to CCNY via its N terminus and to CDK14 via its C terminus. Interacts with CCNY; CCNY mediates its recruitment to the plasma membrane and promotes phosphorylation of LRP6. Interacts with CCDN3 and CDKN1A. Interacts with SEPT8. Interacts with 14-3-3 proteina YWHAB, YWHAE, YWHAH and YWHAQ.

The protein resides in the cell membrane. It is found in the cytoplasm. It localises to the nucleus. The enzyme catalyses L-seryl-[protein] + ATP = O-phospho-L-seryl-[protein] + ADP + H(+). The catalysed reaction is L-threonyl-[protein] + ATP = O-phospho-L-threonyl-[protein] + ADP + H(+). Serine/threonine-protein kinase activity is promoted by associated cyclins CCDN3 and CCNY and repressed by CDKN1A. Functionally, serine/threonine-protein kinase involved in the control of the eukaryotic cell cycle, whose activity is controlled by an associated cyclin. Acts as a cell-cycle regulator of Wnt signaling pathway during G2/M phase by mediating the phosphorylation of LRP6 at 'Ser-1490', leading to the activation of the Wnt signaling pathway. Acts as a regulator of cell cycle progression and cell proliferation via its interaction with CCDN3. Phosphorylates RB1 in vitro, however the relevance of such result remains to be confirmed in vivo. May also play a role in meiosis, neuron differentiation and may indirectly act as a negative regulator of insulin-responsive glucose transport. The sequence is that of Cyclin-dependent kinase 14 (CDK14) from Dasypus novemcinctus (Nine-banded armadillo).